Reading from the N-terminus, the 117-residue chain is Ribosome-binding factor A (117 aa).

The protein belongs to the RbfA family. As to quaternary structure, monomer. Binds 30S ribosomal subunits, but not 50S ribosomal subunits or 70S ribosomes.

It localises to the cytoplasm. In terms of biological role, one of several proteins that assist in the late maturation steps of the functional core of the 30S ribosomal subunit. Associates with free 30S ribosomal subunits (but not with 30S subunits that are part of 70S ribosomes or polysomes). Required for efficient processing of 16S rRNA. May interact with the 5'-terminal helix region of 16S rRNA. This chain is Ribosome-binding factor A, found in Streptococcus suis (strain 98HAH33).